Consider the following 955-residue polypeptide: UPF0182 protein syc2310_c (955 aa).

Transmembrane regions (helical) follow at residues I12–F32, L45–G65, L85–T105, G141–W161, P163–S183, F224–A244, H263–Q283, L306–Q326, and A343–V363.

Belongs to the UPF0182 family.

The protein resides in the cell membrane. In Synechococcus sp. (strain ATCC 27144 / PCC 6301 / SAUG 1402/1) (Anacystis nidulans), this protein is UPF0182 protein syc2310_c.